The following is a 614-amino-acid chain: Replication protein A 70 kDa DNA-binding subunit (614 aa).

The segment at G112–Q178 is disordered. Composition is skewed to polar residues over residues G120–T130 and P158–Q178. The segment at residues W194–N278 is a DNA-binding region (OB). Residues C478–C500 form a C4-type zinc finger.

The protein belongs to the replication factor A protein 1 family. In terms of assembly, component of the heterotrimeric canonical replication protein A complex (RPA).

The protein resides in the nucleus. The protein localises to the PML body. As part of the heterotrimeric replication protein A complex (RPA/RP-A), binds and stabilizes single-stranded DNA intermediates, that form during DNA replication or upon DNA stress. It prevents their reannealing and in parallel, recruits and activates different proteins and complexes involved in DNA metabolism. Thereby, it plays an essential role both in DNA replication and the cellular response to DNA damage. The sequence is that of Replication protein A 70 kDa DNA-binding subunit (RPA1) from Gallus gallus (Chicken).